The primary structure comprises 707 residues: Elongation factor G (707 aa).

The tr-type G domain maps to 8 to 297; sequence ERVRNIGIAA…AVVDYLPSPV (290 aa). GTP is bound by residues 17–24, 96–100, and 150–153; these read AHIDAGKT, DTPGH, and NKMD.

The protein belongs to the TRAFAC class translation factor GTPase superfamily. Classic translation factor GTPase family. EF-G/EF-2 subfamily.

The protein localises to the cytoplasm. Functionally, catalyzes the GTP-dependent ribosomal translocation step during translation elongation. During this step, the ribosome changes from the pre-translocational (PRE) to the post-translocational (POST) state as the newly formed A-site-bound peptidyl-tRNA and P-site-bound deacylated tRNA move to the P and E sites, respectively. Catalyzes the coordinated movement of the two tRNA molecules, the mRNA and conformational changes in the ribosome. In Synechococcus sp. (strain JA-2-3B'a(2-13)) (Cyanobacteria bacterium Yellowstone B-Prime), this protein is Elongation factor G.